The primary structure comprises 252 residues: Probable transcriptional regulatory protein Moth_1704 (252 aa).

The protein belongs to the TACO1 family.

It localises to the cytoplasm. The polypeptide is Probable transcriptional regulatory protein Moth_1704 (Moorella thermoacetica (strain ATCC 39073 / JCM 9320)).